The chain runs to 168 residues: Protein yop-1 (168 aa).

At 1–35 the chain is on the cytoplasmic side; that stretch reads MSSPQDRAQQYIGQLDKELSKYPTLNNLEKTTGVP. The chain crosses the membrane as a helical span at residues 36 to 55; that stretch reads KAYAVIGLVALYFFLIIFNL. A topological domain (lumenal) is located at residue G56. A helical membrane pass occupies residues 57-76; that stretch reads GQLLTNLAGFVLPGYYSLNA. Over 77-86 the chain is Cytoplasmic; it reads LFTASKQDDT. A helical transmembrane segment spans residues 87-103; the sequence is QWLTYWVVFSLFTVIES. The Lumenal portion of the chain corresponds to 104 to 105; the sequence is LI. A helical transmembrane segment spans residues 106-124; that stretch reads SVVYWFPFYFTFKFVFLLW. Residues 125 to 168 are Cytoplasmic-facing; it reads LSLPTFKGAETIFRSFLAPTLGRYFQNGSTASGLRAKADAVHTD.

Belongs to the DP1 family. As to quaternary structure, oligomer.

Its subcellular location is the endoplasmic reticulum membrane. The protein resides in the golgi apparatus membrane. Its function is as follows. Required to generate and maintain the structure of the tubular endoplasmic reticulum network and the vacuole. Induces high curvature in membranes and causes membrane tubule formation. Involved in membrane/vesicle trafficking. This is Protein yop-1 (yop-1) from Neurospora crassa (strain ATCC 24698 / 74-OR23-1A / CBS 708.71 / DSM 1257 / FGSC 987).